We begin with the raw amino-acid sequence, 506 residues long: Exopolyphosphatase (506 aa).

It belongs to the GppA/Ppx family. As to quaternary structure, homodimer. Mg(2+) is required as a cofactor.

The protein resides in the cell membrane. The enzyme catalyses [phosphate](n) + H2O = [phosphate](n-1) + phosphate + H(+). The catalysed reaction is [phosphate](n) + ATP = [phosphate](n+1) + ADP. With respect to regulation, exopolyphosphatase activity is stimulated by NH(4)(+) and K(+). Phosphotransferase activity is insensitive to the addition of K(+) or NH(4)(+) ions. In terms of biological role, degradation of inorganic polyphosphates (polyP). Releases orthophosphate processively from the ends of the polyP chain. Also has polyphosphate:ADP phosphotransferase activity, catalyzing the production of ATP from ADP and polyP. In Pseudomonas aeruginosa (strain ATCC 15692 / DSM 22644 / CIP 104116 / JCM 14847 / LMG 12228 / 1C / PRS 101 / PAO1), this protein is Exopolyphosphatase.